The chain runs to 717 residues: Cleavage stimulation factor subunit 3 (717 aa).

At Ser2 the chain carries N-acetylserine. HAT repeat units follow at residues 45 to 77 (QPIDKARKTYERLVAQFPSSGRFWKLYIEAEIK), 79 to 110 (KNYDKVEKLFQRCLMKVLHIDLWKCYLSYVRE), 117 to 152 (SYKEKMAQAYDFALDKIGMEIMSYQIWVDYINFLKG), 163 to 196 (QRITAVRRVYQRGCVNPMINIEQLWRDYNKYEEG), 221 to 261 (KEYE…WEKS), 271 to 303 (LITKRVMFAYEQCLLVLGHHPDIWYEAAQYLEQ), 319 to 352 (LFSDEAANIYERAISTLLKKNMLLYFAYADYEES), 354 to 387 (MKYEKVHSIYNRLLAIEDIDPTLVYIQYMKFARR), and 458 to 494 (NEDNNTRVLFERVLTSGSLPPEKSGEIWARFLAFESN). Positions 684 to 705 (VKRPNEDSDEDEEKGAVVPPVH) are disordered. Position 691 is a phosphoserine (Ser691).

In terms of assembly, homodimer. The CSTF complex is composed of CSTF1 (50 kDa subunit), CSTF2 (64 kDa subunit) and CSTF3 (77 kDa subunit). CSTF3 directly interacts with CSTF1 and CSTF2. Interacts with FIP1L1.

The protein resides in the nucleus. One of the multiple factors required for polyadenylation and 3'-end cleavage of mammalian pre-mRNAs. The protein is Cleavage stimulation factor subunit 3 (CSTF3) of Pongo abelii (Sumatran orangutan).